The primary structure comprises 282 residues: Putative 4-diphosphocytidyl-2-C-methyl-D-erythritol kinase (282 aa).

Lys-9 is a catalytic residue. 93 to 103 contributes to the ATP binding site; sequence PVSAGLAGGST. Residue Asp-135 is part of the active site.

This sequence belongs to the GHMP kinase family. IspE subfamily.

The catalysed reaction is 4-CDP-2-C-methyl-D-erythritol + ATP = 4-CDP-2-C-methyl-D-erythritol 2-phosphate + ADP + H(+). In terms of biological role, catalyzes the phosphorylation of the position 2 hydroxy group of 4-diphosphocytidyl-2C-methyl-D-erythritol. The sequence is that of Putative 4-diphosphocytidyl-2-C-methyl-D-erythritol kinase from Staphylococcus saprophyticus subsp. saprophyticus (strain ATCC 15305 / DSM 20229 / NCIMB 8711 / NCTC 7292 / S-41).